The following is a 499-amino-acid chain: WD repeat-containing protein 55 homolog (499 aa).

The segment at 1–130 (MHTHNNFKTP…EATFDLDVDD (130 aa)) is disordered. 2 stretches are compositionally biased toward acidic residues: residues 12 to 23 (DEDELDDLDEDM) and 31 to 48 (IEQE…EYDL). Over residues 91-103 (DDAGGASAGGATS) the composition is skewed to low complexity. Over residues 113 to 122 (PSGSNRQSEA) the composition is skewed to polar residues. WD repeat units follow at residues 154 to 193 (KLED…NKLL), 198 to 237 (VHSK…LKKL), 241 to 279 (AHDD…AIFE), 282 to 321 (ELED…MYVQ), 324 to 363 (PYEE…YHCD), and 408 to 447 (QHNM…DFGD). Positions 480–499 (TKEDADDDDHDPSAGPSNMA) are disordered.

The protein belongs to the WD repeat WDR55 family.

This is WD repeat-containing protein 55 homolog from Drosophila yakuba (Fruit fly).